Here is a 375-residue protein sequence, read N- to C-terminus: Alcohol dehydrogenase 1B (375 aa).

Position 1 is an N-acetylserine (S1). Zn(2+)-binding residues include C46, H67, C97, C100, C103, C111, and C174. Residues 199-204, D223, K228, 293-295, and R370 contribute to the NAD(+) site; these read GLGGVG and VGV.

It belongs to the zinc-containing alcohol dehydrogenase family. Class-I subfamily. As to quaternary structure, multimeric (with different ratios of monomers). Requires Zn(2+) as cofactor.

It is found in the cytoplasm. The enzyme catalyses a primary alcohol + NAD(+) = an aldehyde + NADH + H(+). It carries out the reaction a secondary alcohol + NAD(+) = a ketone + NADH + H(+). The sequence is that of Alcohol dehydrogenase 1B from Saara hardwickii (Indian spiny-tailed lizard).